The chain runs to 416 residues: FBD-associated F-box protein At3g52670 (416 aa).

The region spanning 9-62 (EDRMNQLPEDLILRILSFLPTELVIATSVLSKQWRSLWKLVPNLEFDSDDYESE) is the F-box domain. One can recognise an FBD domain in the interval 327-378 (KWNEPKYVPECLLSHLETFVWIRYDWEREEEKEVATYILRNARWLKKGTIST).

This is FBD-associated F-box protein At3g52670 from Arabidopsis thaliana (Mouse-ear cress).